Here is a 430-residue protein sequence, read N- to C-terminus: Transcription factor iws-1 (430 aa).

Over residues 1-14 the composition is skewed to low complexity; the sequence is MSDAASPAGSPAAE. Positions 1 to 153 are disordered; it reads MSDAASPAGS…EENLTPDERR (153 aa). Basic and acidic residues predominate over residues 15-33; sequence PTEHRDEDQVNETHQDDGS. Residues 52–63 show a composition bias toward acidic residues; it reads VLSEIDENEFGD. A compositionally biased stretch (basic residues) spans 95–104; that stretch reads KEGRRPKKRS. Residues 124–137 show a composition bias toward basic and acidic residues; sequence VRAEGERRARKEVE. One can recognise a TFIIS N-terminal domain in the interval 244-321; the sequence is QSVRYFLEPL…GEWSRLILKR (78 aa). The disordered stretch occupies residues 402–430; sequence GQAPTDHRPIGHSGHEAFRRMTQKGKGKR. Basic and acidic residues predominate over residues 406-420; the sequence is TDHRPIGHSGHEAFR.

The protein belongs to the IWS1 family.

The protein localises to the nucleus. Its function is as follows. Transcription factor involved in RNA polymerase II transcription regulation. May function in both SPT15/TBP post-recruitment and recruitment steps of transcription. This is Transcription factor iws-1 (iws-1) from Neurospora crassa (strain ATCC 24698 / 74-OR23-1A / CBS 708.71 / DSM 1257 / FGSC 987).